The primary structure comprises 329 residues: uncharacterized protein (329 aa).

Residues 109-147 (KALGNDQTSSMTSSTTAVTVAKSGDGQQQTGEQKEEDWK) are disordered. Residues 116–131 (TSSMTSSTTAVTVAKS) show a composition bias toward low complexity.

The protein to the C-terminal of MG321/MPN_456.

This is an uncharacterized protein from Mycoplasma pneumoniae (strain ATCC 29342 / M129 / Subtype 1) (Mycoplasmoides pneumoniae).